We begin with the raw amino-acid sequence, 657 residues long: tRNA 5-methylaminomethyl-2-thiouridine biosynthesis bifunctional protein MnmC (657 aa).

The tRNA (mnm(5)s(2)U34)-methyltransferase stretch occupies residues 1 to 239 (MTDRIVPATL…KRAMLVGEFA (239 aa)). Residues 263–657 (IGAGLAGCAV…VRALRHGRVA (395 aa)) form an FAD-dependent cmnm(5)s(2)U34 oxidoreductase region.

In the N-terminal section; belongs to the methyltransferase superfamily. tRNA (mnm(5)s(2)U34)-methyltransferase family. It in the C-terminal section; belongs to the DAO family. FAD is required as a cofactor.

It localises to the cytoplasm. It catalyses the reaction 5-aminomethyl-2-thiouridine(34) in tRNA + S-adenosyl-L-methionine = 5-methylaminomethyl-2-thiouridine(34) in tRNA + S-adenosyl-L-homocysteine + H(+). Its function is as follows. Catalyzes the last two steps in the biosynthesis of 5-methylaminomethyl-2-thiouridine (mnm(5)s(2)U) at the wobble position (U34) in tRNA. Catalyzes the FAD-dependent demodification of cmnm(5)s(2)U34 to nm(5)s(2)U34, followed by the transfer of a methyl group from S-adenosyl-L-methionine to nm(5)s(2)U34, to form mnm(5)s(2)U34. The polypeptide is tRNA 5-methylaminomethyl-2-thiouridine biosynthesis bifunctional protein MnmC (Burkholderia pseudomallei (strain 668)).